Consider the following 314-residue polypeptide: Phosphoribosylaminoimidazole-succinocarboxamide synthase (314 aa).

It belongs to the SAICAR synthetase family.

The catalysed reaction is 5-amino-1-(5-phospho-D-ribosyl)imidazole-4-carboxylate + L-aspartate + ATP = (2S)-2-[5-amino-1-(5-phospho-beta-D-ribosyl)imidazole-4-carboxamido]succinate + ADP + phosphate + 2 H(+). The protein operates within purine metabolism; IMP biosynthesis via de novo pathway; 5-amino-1-(5-phospho-D-ribosyl)imidazole-4-carboxamide from 5-amino-1-(5-phospho-D-ribosyl)imidazole-4-carboxylate: step 1/2. This is Phosphoribosylaminoimidazole-succinocarboxamide synthase from Bacteroides thetaiotaomicron (strain ATCC 29148 / DSM 2079 / JCM 5827 / CCUG 10774 / NCTC 10582 / VPI-5482 / E50).